We begin with the raw amino-acid sequence, 331 residues long: UPF0194 membrane protein YbhG (331 aa).

The first 19 residues, 1–19, serve as a signal peptide directing secretion; the sequence is MKKPVVIGLAIAAIVAVIA. Residues 107–208 adopt a coiled-coil conformation; it reads EEIAQAAAAV…LDLQDTTLIA (102 aa).

The protein belongs to the UPF0194 family.

It localises to the periplasm. This is UPF0194 membrane protein YbhG from Salmonella heidelberg (strain SL476).